Reading from the N-terminus, the 235-residue chain is Retron Ec48 transmembrane protein (235 aa).

2 consecutive transmembrane segments (helical) span residues 11 to 31 and 64 to 84; these read IVGV…FETI and AFGW…ALMT.

It localises to the cell inner membrane. Its function is as follows. Membrane component of antiviral defense system Retron Ec48, composed of a non-coding RNA (ncRNA), a reverse transcriptase (RT) and this membrane protein. Expression of this retron confers protection against bacteriophages lambda, T2, T4, T5 and T7. At multiplicity of infection (MOI) of 0.02 cultures grow normally when infected with lambda without collapsing, at MOI 2 cultures enter growth stasis. At MOI 3 cell membranes are permeabilized within 15 minutes of infection but do not lyse, suggesting the phage are not able to finish a replication cycle. Antiviral defense is suppressed by mutations that knockout the lambda gam expression or phage T7 gp5.9 expression; both viral genes inhibit host RecBCD. The Ec48 retron may sense the integrity of the RecBCD enzyme; when RecBCD is perturbed by viral proteins the Ec48 effector (the membrane protein) is activated, leading to abortive infection and bacterial growth arrest. This Escherichia coli protein is Retron Ec48 transmembrane protein.